The chain runs to 342 residues: S-adenosylmethionine:tRNA ribosyltransferase-isomerase (342 aa).

Belongs to the QueA family. In terms of assembly, monomer.

The protein resides in the cytoplasm. The catalysed reaction is 7-aminomethyl-7-carbaguanosine(34) in tRNA + S-adenosyl-L-methionine = epoxyqueuosine(34) in tRNA + adenine + L-methionine + 2 H(+). Its pathway is tRNA modification; tRNA-queuosine biosynthesis. Functionally, transfers and isomerizes the ribose moiety from AdoMet to the 7-aminomethyl group of 7-deazaguanine (preQ1-tRNA) to give epoxyqueuosine (oQ-tRNA). This Shouchella clausii (strain KSM-K16) (Alkalihalobacillus clausii) protein is S-adenosylmethionine:tRNA ribosyltransferase-isomerase.